Consider the following 312-residue polypeptide: DNA primase small subunit PriS (312 aa).

Active-site residues include aspartate 88, aspartate 90, and aspartate 215.

This sequence belongs to the eukaryotic-type primase small subunit family. In terms of assembly, heterodimer of a small subunit (PriS) and a large subunit (PriL). Mg(2+) serves as cofactor. Requires Mn(2+) as cofactor.

Catalytic subunit of DNA primase, an RNA polymerase that catalyzes the synthesis of short RNA molecules used as primers for DNA polymerase during DNA replication. The small subunit contains the primase catalytic core and has DNA synthesis activity on its own. Binding to the large subunit stabilizes and modulates the activity, increasing the rate of DNA synthesis while decreasing the length of the DNA fragments, and conferring RNA synthesis capability. The DNA polymerase activity may enable DNA primase to also catalyze primer extension after primer synthesis. May also play a role in DNA repair. In Pyrobaculum islandicum (strain DSM 4184 / JCM 9189 / GEO3), this protein is DNA primase small subunit PriS.